Here is a 345-residue protein sequence, read N- to C-terminus: Anthranilate phosphoribosyltransferase (345 aa).

5-phospho-alpha-D-ribose 1-diphosphate is bound by residues glycine 80, 83–84 (GD), threonine 88, 90–93 (NIST), 108–116 (KHGNRSVTS), and serine 120. Anthranilate is bound at residue glycine 80. Serine 92 is a Mg(2+) binding site. Asparagine 111 is a binding site for anthranilate. Residue arginine 166 coordinates anthranilate. Residues aspartate 229 and glutamate 230 each contribute to the Mg(2+) site.

This sequence belongs to the anthranilate phosphoribosyltransferase family. As to quaternary structure, homodimer. Requires Mg(2+) as cofactor.

It catalyses the reaction N-(5-phospho-beta-D-ribosyl)anthranilate + diphosphate = 5-phospho-alpha-D-ribose 1-diphosphate + anthranilate. Its pathway is amino-acid biosynthesis; L-tryptophan biosynthesis; L-tryptophan from chorismate: step 2/5. Catalyzes the transfer of the phosphoribosyl group of 5-phosphorylribose-1-pyrophosphate (PRPP) to anthranilate to yield N-(5'-phosphoribosyl)-anthranilate (PRA). This chain is Anthranilate phosphoribosyltransferase, found in Chlorobium phaeobacteroides (strain BS1).